The chain runs to 111 residues: 4'-hydroxy-3'-methoxypropiophenone carrier protein ppsC (111 aa).

A disordered region spans residues 1-21 (MSAQVMRPGTPQHEGQEFLSG).

It participates in secondary metabolite biosynthesis. Functionally, 4'-hydroxy-3'-methoxypropiophenone carrier protein; part of the gene cluster that mediates the biosynthesis of 2,4'-dihydroxy-3'-methoxypropiophenone. The first step of the pathway is the conversion of acetate into acetyl-CoA by the acyl-CoA ligase ppsA. Acetyl-CoA is then used as a starter unit by the polyketide synthase ppsB and condensed with 4 malonyl-CoA unit to produce the pentaketide backbone. During polyketide extension, the polykedite chain is probably reduced and dehydrated by the KR and PT domains, respectively. O-methylation seems to be catalyzed by an unknown methyltransferase rather than by the CMeT domain of ppsB. Two hydroxylations and one further decarboxylation step catalyzed by yet unknown enzymes are then required to yield 4'-hydroxy-3'-methoxypropiophenone. PpsC functions as a carrier protein to transport 4'-hydroxy-3'-methoxypropiophenone to a specific cell compartment in which 4'-hydroxy-3'-methoxypropiophenone is hydroxylated to 2,4'-dihydroxy-3'-methoxypropiophenone by a still to be identified enzyme. This is 4'-hydroxy-3'-methoxypropiophenone carrier protein ppsC from Aspergillus oryzae (strain ATCC 42149 / RIB 40) (Yellow koji mold).